The primary structure comprises 181 residues: uncharacterized protein (181 aa).

Composition is skewed to gly residues over residues 143–156 (RRGGRYGDFGGPRG) and 170–181 (GPFGPGYRGPRF). The disordered stretch occupies residues 143–181 (RRGGRYGDFGGPRGPRGPRNDGPFGPFGPFGPGYRGPRF).

In terms of assembly, has been detected in a cytochrome bc1-aa3 supercomplex; its deletion however leaves complex activity unaffected.

This is an uncharacterized protein from Corynebacterium glutamicum (strain ATCC 13032 / DSM 20300 / JCM 1318 / BCRC 11384 / CCUG 27702 / LMG 3730 / NBRC 12168 / NCIMB 10025 / NRRL B-2784 / 534).